A 134-amino-acid chain; its full sequence is MDSCHTTKSCVLILLVVLLCAERAQGLECYNCLGVSLGIACKSITCPYPDAVCISQQVELIVDSQRRKVKNKLCFPFCPANLENMEILGTTVNVNTSCCKEDLCNAPFSTGGSTWTMTRVLLLNLGSVFLQTLL.

The first 26 residues, 1-26, serve as a signal peptide directing secretion; the sequence is MDSCHTTKSCVLILLVVLLCAERAQG. The UPAR/Ly6 domain maps to 27 to 119; it reads LECYNCLGVS…TGGSTWTMTR (93 aa). 5 disulfides stabilise this stretch: C29/C53, C32/C41, C46/C74, C78/C98, and C99/C104. Residue G112 is the site of GPI-anchor amidated glycine attachment. A propeptide spans 113–134 (removed in mature form); sequence STWTMTRVLLLNLGSVFLQTLL.

It localises to the cell membrane. The chain is Lymphocyte antigen 6F (Ly6f) from Mus musculus (Mouse).